The chain runs to 163 residues: 2-C-methyl-D-erythritol 2,4-cyclodiphosphate synthase (163 aa).

A divalent metal cation contacts are provided by Asp10 and His12. 4-CDP-2-C-methyl-D-erythritol 2-phosphate contacts are provided by residues 10-12 (DVH) and 36-37 (HS). A divalent metal cation is bound at residue His44. 4-CDP-2-C-methyl-D-erythritol 2-phosphate contacts are provided by residues 58–60 (DIG), 63–67 (FPDND), 134–137 (TTTE), Phe141, and Arg144.

The protein belongs to the IspF family. In terms of assembly, homotrimer. A divalent metal cation serves as cofactor.

The enzyme catalyses 4-CDP-2-C-methyl-D-erythritol 2-phosphate = 2-C-methyl-D-erythritol 2,4-cyclic diphosphate + CMP. It participates in isoprenoid biosynthesis; isopentenyl diphosphate biosynthesis via DXP pathway; isopentenyl diphosphate from 1-deoxy-D-xylulose 5-phosphate: step 4/6. Involved in the biosynthesis of isopentenyl diphosphate (IPP) and dimethylallyl diphosphate (DMAPP), two major building blocks of isoprenoid compounds. Catalyzes the conversion of 4-diphosphocytidyl-2-C-methyl-D-erythritol 2-phosphate (CDP-ME2P) to 2-C-methyl-D-erythritol 2,4-cyclodiphosphate (ME-CPP) with a corresponding release of cytidine 5-monophosphate (CMP). In Carboxydothermus hydrogenoformans (strain ATCC BAA-161 / DSM 6008 / Z-2901), this protein is 2-C-methyl-D-erythritol 2,4-cyclodiphosphate synthase.